The following is a 407-amino-acid chain: Arrestin domain-containing protein 2 (407 aa).

This sequence belongs to the arrestin family. As to quaternary structure, interacts with WWP1 (via WW domains).

In Mus musculus (Mouse), this protein is Arrestin domain-containing protein 2 (Arrdc2).